We begin with the raw amino-acid sequence, 503 residues long: Potassium voltage-gated channel subfamily V member 1 (503 aa).

Disordered stretches follow at residues 1 to 20 and 171 to 192; these read MDLSPRNRPLLDSSSLDSGS and KKDTDDQESQHESEQDFSQGPC. At 3-213 the chain is on the cytoplasmic side; it reads LSPRNRPLLD…EKPGSSTAAR (211 aa). Residues 10–20 are compositionally biased toward low complexity; the sequence is LLDSSSLDSGS. Residues 171-184 show a composition bias toward basic and acidic residues; sequence KKDTDDQESQHESE. Residues 214-234 traverse the membrane as a helical segment; sequence IFGVISIIFVAVSIVNMALMS. Over 235 to 241 the chain is Extracellular; the sequence is AELSWLN. Residues 242–262 traverse the membrane as a helical segment; that stretch reads LQLLEILEYVCISWFTGEFIL. Residues 263–279 are Cytoplasmic-facing; the sequence is RFLCVKDRCHFLRKVPN. Residues 280–300 traverse the membrane as a helical segment; the sequence is IIDLLAILPFYITLLVESLSG. Residues 301-312 lie on the Extracellular side of the membrane; sequence SHTTQELENVGR. Residues 313–334 traverse the membrane as a helical; Voltage-sensor segment; the sequence is LVQVLRLLRALRMLKLGRHSTG. The Cytoplasmic segment spans residues 335–348; that stretch reads LRSLGMTITQCYEE. A helical transmembrane segment spans residues 349 to 369; that stretch reads VGLLLLFLSVGISIFSTIEYF. Positions 395–400 match the Selectivity filter motif; the sequence is TVGYGD. Residues 410 to 430 traverse the membrane as a helical segment; it reads IVAFMCILSGILVLALPIAII. Over 431–503 the chain is Cytoplasmic; the sequence is NDRFSACYFT…RSSGGDDFWF (73 aa).

Belongs to the potassium channel family. V (TC 1.A.1.2) subfamily. Kv8.1/KCNV1 sub-subfamily. Heteromultimer with KCNB1 and KCNB2. Interacts with KCNC4 and KCND1. Detected in brain, in neocortex, olfactory tubercle, hippocampus, dentate gyrus, piriform cortex and amygdala. Detected in Purkinje cells and granular cells of the cerebellum, in hippocampal CA4 neurons and neocortex pyramidal cells.

The protein localises to the cell membrane. Functionally, potassium channel subunit that does not form functional channels by itself. Modulates KCNB1 and KCNB2 channel activity by shifting the threshold for inactivation to more negative values and by slowing the rate of inactivation. Can down-regulate the channel activity of KCNB1, KCNB2, KCNC4 and KCND1, possibly by trapping them in intracellular membranes. The chain is Potassium voltage-gated channel subfamily V member 1 (Kcnv1) from Rattus norvegicus (Rat).